The sequence spans 286 residues: MVRILNFFEINENASDQENIISAPYDVYIPLMREKYEQIKLGRYDKTEYPENFPQQYRTGRGIAYFSEMVYEAFRGGLFNQFIVEGQQGAGKSSFALWVARAIYGNWHDALKHVVIDPFQLRQIILVAEANSITIPLIVVDDAGLFFSKGLAYRRQTGRMQTIQRLLQVIRTAVSNIILTTPNEEELSGIVIRQPKQYKIIIEKQNELVSKARVYEEEIQPLRGKKITRRLKLRDDIEKNLRTPLDFLEVAQNAHEVNLPRHIDDTAYQIYMKLRGLYTAIALRTS.

This is an uncharacterized protein from Acidianus convivator (ATV).